The chain runs to 167 residues: UPF0178 protein bll3966 (167 aa).

This sequence belongs to the UPF0178 family.

This chain is UPF0178 protein bll3966, found in Bradyrhizobium diazoefficiens (strain JCM 10833 / BCRC 13528 / IAM 13628 / NBRC 14792 / USDA 110).